Reading from the N-terminus, the 429-residue chain is Enolase (429 aa).

Gln164 contacts (2R)-2-phosphoglycerate. Glu206 (proton donor) is an active-site residue. 3 residues coordinate Mg(2+): Asp243, Glu286, and Asp313. (2R)-2-phosphoglycerate contacts are provided by Lys338, Arg367, Ser368, and Lys389. Lys338 (proton acceptor) is an active-site residue.

It belongs to the enolase family. Mg(2+) serves as cofactor.

The protein localises to the cytoplasm. The protein resides in the secreted. It is found in the cell surface. It catalyses the reaction (2R)-2-phosphoglycerate = phosphoenolpyruvate + H2O. It functions in the pathway carbohydrate degradation; glycolysis; pyruvate from D-glyceraldehyde 3-phosphate: step 4/5. Functionally, catalyzes the reversible conversion of 2-phosphoglycerate (2-PG) into phosphoenolpyruvate (PEP). It is essential for the degradation of carbohydrates via glycolysis. The polypeptide is Enolase (Thermosipho melanesiensis (strain DSM 12029 / CIP 104789 / BI429)).